The following is a 484-amino-acid chain: Chromosomal replication initiator protein DnaA (484 aa).

The segment at 1–73 (MQEGKNIWSL…EILIEKGHST (73 aa)) is domain I, interacts with DnaA modulators. Residues 73 to 140 (TINVEFIHSQ…EEIHIKYRNP (68 aa)) form a domain II region. The segment at 141-357 (FLKKKYTFEN…AAVTKLKAHI (217 aa)) is domain III, AAA+ region. Residues G185, G187, K188, and T189 each contribute to the ATP site. The segment at 358-484 (DLEDIEIDTN…IELMNKINKN (127 aa)) is domain IV, binds dsDNA.

Belongs to the DnaA family. As to quaternary structure, oligomerizes as a right-handed, spiral filament on DNA at oriC.

The protein localises to the cytoplasm. Its function is as follows. Plays an essential role in the initiation and regulation of chromosomal replication. ATP-DnaA binds to the origin of replication (oriC) to initiate formation of the DNA replication initiation complex once per cell cycle. Binds the DnaA box (a 9 base pair repeat at the origin) and separates the double-stranded (ds)DNA. Forms a right-handed helical filament on oriC DNA; dsDNA binds to the exterior of the filament while single-stranded (ss)DNA is stabiized in the filament's interior. The ATP-DnaA-oriC complex binds and stabilizes one strand of the AT-rich DNA unwinding element (DUE), permitting loading of DNA polymerase. After initiation quickly degrades to an ADP-DnaA complex that is not apt for DNA replication. Binds acidic phospholipids. The sequence is that of Chromosomal replication initiator protein DnaA from Borrelia duttonii (strain Ly).